The sequence spans 56 residues: Ovomucoid (56 aa).

In terms of domain architecture, Kazal-like spans 6–56 (VDCSEYPKPACTLEYRPLCGSDNKTYGNKCNFCNAVVESNGTLTLSHFGKC). 3 disulfides stabilise this stretch: Cys8/Cys38, Cys16/Cys35, and Cys24/Cys56. N-linked (GlcNAc...) asparagine glycosylation occurs at Asn45.

Its subcellular location is the secreted. This chain is Ovomucoid, found in Meleagris ocellata (Ocellated turkey).